Consider the following 657-residue polypeptide: Glycogen debranching enzyme (657 aa).

The Nucleophile role is filled by D336. The active-site Proton donor is the E371. Residues 458-467 are compositionally biased toward basic and acidic residues; that stretch reads NEANGEENRD. The disordered stretch occupies residues 458–479; it reads NEANGEENRDGTNNNYSNNHGK.

Belongs to the glycosyl hydrolase 13 family.

The enzyme catalyses Hydrolysis of (1-&gt;6)-alpha-D-glucosidic linkages to branches with degrees of polymerization of three or four glucose residues in limit dextrin.. It participates in glycan degradation; glycogen degradation. Functionally, removes maltotriose and maltotetraose chains that are attached by 1,6-alpha-linkage to the limit dextrin main chain, generating a debranched limit dextrin. This is Glycogen debranching enzyme from Shigella boydii serotype 18 (strain CDC 3083-94 / BS512).